The chain runs to 83 residues: Small ribosomal subunit protein eS21 (83 aa).

The protein belongs to the eukaryotic ribosomal protein eS21 family. In terms of assembly, component of the 40S small ribosomal subunit. Interacts with sta.

Its subcellular location is the cytoplasm. The protein localises to the cytosol. The protein resides in the rough endoplasmic reticulum. Functionally, may be an associated component of the ribosome rather than a core structural subunit. May act as a translation initiation factor. Has a role in regulation of cell proliferation in the hematopoietic organs and the imaginal disks of larva. The polypeptide is Small ribosomal subunit protein eS21 (RpS21) (Drosophila ananassae (Fruit fly)).